A 65-amino-acid polypeptide reads, in one-letter code: Large ribosomal subunit protein bL33c (65 aa).

Belongs to the bacterial ribosomal protein bL33 family.

The protein localises to the plastid. It is found in the chloroplast. The polypeptide is Large ribosomal subunit protein bL33c (Pyropia yezoensis (Susabi-nori)).